The following is a 369-amino-acid chain: Probable dual-specificity RNA methyltransferase RlmN (369 aa).

The active-site Proton acceptor is glutamate 108. The 238-residue stretch at tyrosine 114–arginine 351 folds into the Radical SAM core domain. Cysteine 121 and cysteine 362 are oxidised to a cystine. [4Fe-4S] cluster contacts are provided by cysteine 128, cysteine 132, and cysteine 135. Residues glycine 183–glutamate 184, serine 217, serine 240–histidine 242, and asparagine 319 contribute to the S-adenosyl-L-methionine site. Catalysis depends on cysteine 362, which acts as the S-methylcysteine intermediate.

This sequence belongs to the radical SAM superfamily. RlmN family. Requires [4Fe-4S] cluster as cofactor.

The protein localises to the cytoplasm. It catalyses the reaction adenosine(2503) in 23S rRNA + 2 reduced [2Fe-2S]-[ferredoxin] + 2 S-adenosyl-L-methionine = 2-methyladenosine(2503) in 23S rRNA + 5'-deoxyadenosine + L-methionine + 2 oxidized [2Fe-2S]-[ferredoxin] + S-adenosyl-L-homocysteine. The enzyme catalyses adenosine(37) in tRNA + 2 reduced [2Fe-2S]-[ferredoxin] + 2 S-adenosyl-L-methionine = 2-methyladenosine(37) in tRNA + 5'-deoxyadenosine + L-methionine + 2 oxidized [2Fe-2S]-[ferredoxin] + S-adenosyl-L-homocysteine. Functionally, specifically methylates position 2 of adenine 2503 in 23S rRNA and position 2 of adenine 37 in tRNAs. The sequence is that of Probable dual-specificity RNA methyltransferase RlmN from Rhodococcus opacus (strain B4).